The following is a 307-amino-acid chain: tRNA pseudouridine synthase B (307 aa).

Asp48 functions as the Nucleophile in the catalytic mechanism.

It belongs to the pseudouridine synthase TruB family. Type 1 subfamily.

The enzyme catalyses uridine(55) in tRNA = pseudouridine(55) in tRNA. In terms of biological role, responsible for synthesis of pseudouridine from uracil-55 in the psi GC loop of transfer RNAs. The sequence is that of tRNA pseudouridine synthase B from Pasteurella multocida (strain Pm70).